Reading from the N-terminus, the 200-residue chain is ATP-dependent Clp protease proteolytic subunit (200 aa).

Residue S101 is the Nucleophile of the active site. Residue H126 is part of the active site.

The protein belongs to the peptidase S14 family. In terms of assembly, component of the chloroplastic Clp protease core complex.

It is found in the plastid. The protein localises to the chloroplast stroma. The enzyme catalyses Hydrolysis of proteins to small peptides in the presence of ATP and magnesium. alpha-casein is the usual test substrate. In the absence of ATP, only oligopeptides shorter than five residues are hydrolyzed (such as succinyl-Leu-Tyr-|-NHMec, and Leu-Tyr-Leu-|-Tyr-Trp, in which cleavage of the -Tyr-|-Leu- and -Tyr-|-Trp bonds also occurs).. In terms of biological role, cleaves peptides in various proteins in a process that requires ATP hydrolysis. Has a chymotrypsin-like activity. Plays a major role in the degradation of misfolded proteins. This is ATP-dependent Clp protease proteolytic subunit from Ostreococcus tauri.